Consider the following 351-residue polypeptide: Spermidine/putrescine import ATP-binding protein PotA (351 aa).

The 231-residue stretch at 6–236 (LELRNVTKEY…PENAWVANFI (231 aa)) folds into the ABC transporter domain. 38 to 45 (GPSGCGKT) serves as a coordination point for ATP.

It belongs to the ABC transporter superfamily. Spermidine/putrescine importer (TC 3.A.1.11.1) family. As to quaternary structure, the complex is composed of two ATP-binding proteins (PotA), two transmembrane proteins (PotB and PotC) and a solute-binding protein (PotD).

The protein resides in the cell membrane. The enzyme catalyses ATP + H2O + polyamine-[polyamine-binding protein]Side 1 = ADP + phosphate + polyamineSide 2 + [polyamine-binding protein]Side 1.. In terms of biological role, part of the ABC transporter complex PotABCD involved in spermidine/putrescine import. Responsible for energy coupling to the transport system. The chain is Spermidine/putrescine import ATP-binding protein PotA from Mycoplasma capricolum subsp. capricolum (strain California kid / ATCC 27343 / NCTC 10154).